Reading from the N-terminus, the 390-residue chain is DNA polymerase IV (390 aa).

The UmuC domain occupies 6-187; sequence VMHVDLDAFF…LDISIMPGIG (182 aa). Mg(2+) is bound by residues Asp10 and Asp105. Glu106 is an active-site residue.

Belongs to the DNA polymerase type-Y family. Monomer. The cofactor is Mg(2+).

It is found in the cytoplasm. It carries out the reaction DNA(n) + a 2'-deoxyribonucleoside 5'-triphosphate = DNA(n+1) + diphosphate. In terms of biological role, poorly processive, error-prone DNA polymerase involved in untargeted mutagenesis. Copies undamaged DNA at stalled replication forks, which arise in vivo from mismatched or misaligned primer ends. These misaligned primers can be extended by PolIV. Exhibits no 3'-5' exonuclease (proofreading) activity. May be involved in translesional synthesis, in conjunction with the beta clamp from PolIII. The chain is DNA polymerase IV from Dehalococcoides mccartyi (strain ATCC BAA-2266 / KCTC 15142 / 195) (Dehalococcoides ethenogenes (strain 195)).